The chain runs to 287 residues: 2-dehydro-3-deoxyphosphooctonate aldolase (287 aa).

Belongs to the KdsA family.

The protein localises to the cytoplasm. The catalysed reaction is D-arabinose 5-phosphate + phosphoenolpyruvate + H2O = 3-deoxy-alpha-D-manno-2-octulosonate-8-phosphate + phosphate. It functions in the pathway carbohydrate biosynthesis; 3-deoxy-D-manno-octulosonate biosynthesis; 3-deoxy-D-manno-octulosonate from D-ribulose 5-phosphate: step 2/3. It participates in bacterial outer membrane biogenesis; lipopolysaccharide biosynthesis. In Nitrobacter winogradskyi (strain ATCC 25391 / DSM 10237 / CIP 104748 / NCIMB 11846 / Nb-255), this protein is 2-dehydro-3-deoxyphosphooctonate aldolase.